The primary structure comprises 130 residues: Holo-[acyl-carrier-protein] synthase (130 aa).

D9 and E58 together coordinate Mg(2+).

This sequence belongs to the P-Pant transferase superfamily. AcpS family. It depends on Mg(2+) as a cofactor.

Its subcellular location is the cytoplasm. The catalysed reaction is apo-[ACP] + CoA = holo-[ACP] + adenosine 3',5'-bisphosphate + H(+). Its function is as follows. Transfers the 4'-phosphopantetheine moiety from coenzyme A to a Ser of acyl-carrier-protein. The polypeptide is Holo-[acyl-carrier-protein] synthase (Mycolicibacterium smegmatis (strain ATCC 700084 / mc(2)155) (Mycobacterium smegmatis)).